The sequence spans 471 residues: Ribulose bisphosphate carboxylase large chain 2 (471 aa).

Positions 116 and 166 each coordinate substrate. Lys168 acts as the Proton acceptor in catalysis. Lys170 contributes to the substrate binding site. Residues Lys194, Asp196, and Glu197 each contribute to the Mg(2+) site. Lys194 is subject to N6-carboxylysine. His287 functions as the Proton acceptor in the catalytic mechanism. Positions 288, 320, and 372 each coordinate substrate.

Belongs to the RuBisCO large chain family. Type I subfamily. In terms of assembly, heterohexadecamer of 8 large chains and 8 small chains. Mg(2+) serves as cofactor.

It localises to the carboxysome. The catalysed reaction is 2 (2R)-3-phosphoglycerate + 2 H(+) = D-ribulose 1,5-bisphosphate + CO2 + H2O. It carries out the reaction D-ribulose 1,5-bisphosphate + O2 = 2-phosphoglycolate + (2R)-3-phosphoglycerate + 2 H(+). In terms of biological role, ruBisCO catalyzes two reactions: the carboxylation of D-ribulose 1,5-bisphosphate, the primary event in carbon dioxide fixation, as well as the oxidative fragmentation of the pentose substrate. Both reactions occur simultaneously and in competition at the same active site. The protein is Ribulose bisphosphate carboxylase large chain 2 of Hydrogenovibrio marinus.